The chain runs to 389 residues: MNLHEYQGKQLFAEYGLPVSKGVAAETPAEAASAAGILGGDTWVVKAQVHAGGRGKAGGVKLVKSKAEIEEFAKQWLGKNLVTYQTDENGQPVSRILVETCTDIDQELYLGAVVDRSTRRIVFMASTEGGVEIEKVAEETPEKILKAIIDPLAGAQPYQARDLAFKLGLEGKQIKQFTQIFLGLAKMFKEKDLALLEINPLVITKEGDLHCLDAKINIDGNALYRQPALKEMHDPSQEDEREAHAAKWELNYVALDGNIGCMVNGAGLAMGTMDIVKLHGGQPANFLDVGGGATKERVVEAFKIILSDESVSAVLINIFGGIVRCDLIAEGVIGAVEEVGVKIPVVCRLEGNNAELGAKVLADSGLNIIAATSLTDAAEQVVKAAKGDA.

In terms of domain architecture, ATP-grasp spans 9-244 (KQLFAEYGLP…PSQEDEREAH (236 aa)). ATP-binding positions include Lys46, 53–55 (GRG), Glu99, Thr102, and Glu107. The Mg(2+) site is built by Asn199 and Asp213. Residues Asn264 and 321-323 (GIV) each bind substrate.

The protein belongs to the succinate/malate CoA ligase beta subunit family. Heterotetramer of two alpha and two beta subunits. The cofactor is Mg(2+).

The enzyme catalyses succinate + ATP + CoA = succinyl-CoA + ADP + phosphate. The catalysed reaction is GTP + succinate + CoA = succinyl-CoA + GDP + phosphate. The protein operates within carbohydrate metabolism; tricarboxylic acid cycle; succinate from succinyl-CoA (ligase route): step 1/1. Its function is as follows. Succinyl-CoA synthetase functions in the citric acid cycle (TCA), coupling the hydrolysis of succinyl-CoA to the synthesis of either ATP or GTP and thus represents the only step of substrate-level phosphorylation in the TCA. The beta subunit provides nucleotide specificity of the enzyme and binds the substrate succinate, while the binding sites for coenzyme A and phosphate are found in the alpha subunit. The protein is Succinate--CoA ligase [ADP-forming] subunit beta of Teredinibacter turnerae (strain ATCC 39867 / T7901).